A 408-amino-acid polypeptide reads, in one-letter code: Elongation factor Tu (408 aa).

In terms of domain architecture, tr-type G spans 10–219 (KTHVNVGTIG…ALDTYIPDPV (210 aa)). Residues 19–26 (GHVDHGKT), 88–92 (DCPGH), and 143–146 (NKCD) contribute to the GTP site. Position 26 (Thr26) interacts with Mg(2+).

This sequence belongs to the TRAFAC class translation factor GTPase superfamily. Classic translation factor GTPase family. EF-Tu/EF-1A subfamily. As to quaternary structure, monomer.

It is found in the cytoplasm. It catalyses the reaction GTP + H2O = GDP + phosphate + H(+). GTP hydrolase that promotes the GTP-dependent binding of aminoacyl-tRNA to the A-site of ribosomes during protein biosynthesis. This chain is Elongation factor Tu, found in Brachyspira hyodysenteriae (strain ATCC 49526 / WA1).